The chain runs to 120 residues: Protein FAM241B (120 aa).

The interval 12–59 (QDDDPRVRTTTQHRSSSSQQGFFNRGHGAPPGGPGPRQQQAGARLGAA) is disordered. Composition is skewed to low complexity over residues 19–39 (RTTT…RGHG) and 47–59 (PRQQ…LGAA). Serine 61 carries the phosphoserine modification. Residues 91-111 (ILLLFLLMMLGVRGLLLVGLV) traverse the membrane as a helical segment.

It belongs to the FAM241 family.

Its subcellular location is the membrane. Functionally, may play a role in lysosome homeostasis. This Mus musculus (Mouse) protein is Protein FAM241B.